The primary structure comprises 532 residues: MLDSSVPTFSVTTPLYYVNDVPHLGSAYTTVVADTLARFKRLQGYDVLMITGTDEHGQKIQRTAEAQELDPQTHCDRTVVKFKELWRSLNILYDRFSRTTDPRHLAIVKDFFQRVWDKGDIYLAQQQGWYCVACEEFKEKRDLLEDNHCPLHPNRKAEWRDEENYFFRLSRYQHPLEELYAQRPEFIQPSSRRNEVLNFVAQGLQDFSISRVNLDWGFPLPNDPNHTIYVWFDALLGYVTALLDEDEEPNLTNALVKWWPINLHLIGKDILRFHAVYWPAMLMSAELAIPAQVFGHGFLTKDGQKMGKSLGNTVDPLDLINRYGEDAFRYYFLKEIEFGKDGDFNEQRFVNVLNADLANDLGNLLNRTLGMVKKYCQGQGPQVMATDLAPDNPLKALGSHLGEEVSSAYERLSFTDACEAIFTLVRAGNKYIDDMAPWKLFKQGSQKEVEDVLYSVLESIRLSAYLLSPIVPRLSTKIYQQLGFTWDFDQWRSPLEQAEEFNRHQSWGQLGANQNLPPAQPIFTKLELPAEE.

The 'HIGH' region signature appears at 16 to 26; that stretch reads YYVNDVPHLGS. Positions 131, 134, 149, and 152 each coordinate Zn(2+). Residues 305-309 carry the 'KMSKS' region motif; sequence KMGKS. K308 provides a ligand contact to ATP.

Belongs to the class-I aminoacyl-tRNA synthetase family. MetG type 2A subfamily. In terms of assembly, monomer. Requires Zn(2+) as cofactor.

Its subcellular location is the cytoplasm. It catalyses the reaction tRNA(Met) + L-methionine + ATP = L-methionyl-tRNA(Met) + AMP + diphosphate. Its function is as follows. Is required not only for elongation of protein synthesis but also for the initiation of all mRNA translation through initiator tRNA(fMet) aminoacylation. This Synechocystis sp. (strain ATCC 27184 / PCC 6803 / Kazusa) protein is Methionine--tRNA ligase (metG).